A 198-amino-acid polypeptide reads, in one-letter code: Threonylcarbamoyl-AMP synthase (198 aa).

The 184-residue stretch at 15–198 (LLKIYHIIKL…AISGQLIRRG (184 aa)) folds into the YrdC-like domain.

This sequence belongs to the SUA5 family. TsaC subfamily.

Its subcellular location is the cytoplasm. The catalysed reaction is L-threonine + hydrogencarbonate + ATP = L-threonylcarbamoyladenylate + diphosphate + H2O. In terms of biological role, required for the formation of a threonylcarbamoyl group on adenosine at position 37 (t(6)A37) in tRNAs that read codons beginning with adenine. Catalyzes the conversion of L-threonine, HCO(3)(-)/CO(2) and ATP to give threonylcarbamoyl-AMP (TC-AMP) as the acyladenylate intermediate, with the release of diphosphate. This is Threonylcarbamoyl-AMP synthase from Baumannia cicadellinicola subsp. Homalodisca coagulata.